The primary structure comprises 173 residues: Crossover junction endodeoxyribonuclease RuvC (173 aa).

Catalysis depends on residues D8, E67, and D139. The Mg(2+) site is built by D8, E67, and D139.

The protein belongs to the RuvC family. Homodimer which binds Holliday junction (HJ) DNA. The HJ becomes 2-fold symmetrical on binding to RuvC with unstacked arms; it has a different conformation from HJ DNA in complex with RuvA. In the full resolvosome a probable DNA-RuvA(4)-RuvB(12)-RuvC(2) complex forms which resolves the HJ. The cofactor is Mg(2+).

Its subcellular location is the cytoplasm. The enzyme catalyses Endonucleolytic cleavage at a junction such as a reciprocal single-stranded crossover between two homologous DNA duplexes (Holliday junction).. The RuvA-RuvB-RuvC complex processes Holliday junction (HJ) DNA during genetic recombination and DNA repair. Endonuclease that resolves HJ intermediates. Cleaves cruciform DNA by making single-stranded nicks across the HJ at symmetrical positions within the homologous arms, yielding a 5'-phosphate and a 3'-hydroxyl group; requires a central core of homology in the junction. The consensus cleavage sequence is 5'-(A/T)TT(C/G)-3'. Cleavage occurs on the 3'-side of the TT dinucleotide at the point of strand exchange. HJ branch migration catalyzed by RuvA-RuvB allows RuvC to scan DNA until it finds its consensus sequence, where it cleaves and resolves the cruciform DNA. This is Crossover junction endodeoxyribonuclease RuvC from Klebsiella pneumoniae (strain 342).